A 659-amino-acid polypeptide reads, in one-letter code: Pseudouridylate synthase 7 homolog (659 aa).

Met-1 bears the N-acetylmethionine mark. 2 stretches are compositionally biased toward polar residues: residues 1-10 and 39-54; these read MEMTEMTSVS and CPTT…SLPS. The interval 1–99 is disordered; it reads MEMTEMTSVS…EEEEEEAESF (99 aa). Position 10 is a phosphoserine (Ser-10). A compositionally biased stretch (acidic residues) spans 75–98; sequence PSEEEEEEDGLSEEEEEEEEEAES. Position 125 is a phosphoserine (Ser-125). Residue Asp-292 is the Nucleophile of the active site. Residues 368 to 578 enclose the TRUD domain; sequence GFINYYGMQR…SGAYRKIIIR (211 aa).

This sequence belongs to the pseudouridine synthase TruD family. As to quaternary structure, interacts with SIRT1.

It is found in the nucleus. The catalysed reaction is a uridine in tRNA = a pseudouridine in tRNA. It carries out the reaction uridine(13) in tRNA = pseudouridine(13) in tRNA. The enzyme catalyses a uridine in mRNA = a pseudouridine in mRNA. Its function is as follows. Pseudouridylate synthase that catalyzes pseudouridylation of RNAs. Acts as a regulator of protein synthesis in embryonic stem cells by mediating pseudouridylation of RNA fragments derived from tRNAs (tRFs): pseudouridylated tRFs inhibit translation by targeting the translation initiation complex. Also catalyzes pseudouridylation of mRNAs: mediates pseudouridylation of mRNAs with the consensus sequence 5'-UGUAG-3'. Acts as a regulator of pre-mRNA splicing by mediating pseudouridylation of pre-mRNAs at locations associated with alternatively spliced regions. Pseudouridylation of pre-mRNAs near splice sites directly regulates mRNA splicing and mRNA 3'-end processing. In addition to mRNAs and tRNAs, binds other types of RNAs, such as snRNAs, Y RNAs and vault RNAs, suggesting that it can catalyze pseudouridylation of many RNA types. This Bos taurus (Bovine) protein is Pseudouridylate synthase 7 homolog.